A 407-amino-acid chain; its full sequence is Argininosuccinate synthase (407 aa).

Residues 16–24 (AYSGGLDTS) and alanine 44 each bind ATP. Residues tyrosine 96 and serine 101 each coordinate L-citrulline. Residue glycine 126 participates in ATP binding. 3 residues coordinate L-aspartate: threonine 128, asparagine 132, and aspartate 133. Asparagine 132 serves as a coordination point for L-citrulline. Arginine 136, serine 185, serine 194, glutamate 270, and tyrosine 282 together coordinate L-citrulline.

This sequence belongs to the argininosuccinate synthase family. Type 1 subfamily. Homotetramer.

The protein localises to the cytoplasm. The enzyme catalyses L-citrulline + L-aspartate + ATP = 2-(N(omega)-L-arginino)succinate + AMP + diphosphate + H(+). Its pathway is amino-acid biosynthesis; L-arginine biosynthesis; L-arginine from L-ornithine and carbamoyl phosphate: step 2/3. This Shewanella amazonensis (strain ATCC BAA-1098 / SB2B) protein is Argininosuccinate synthase.